The sequence spans 144 residues: Large ribosomal subunit protein uL16 (144 aa).

Belongs to the universal ribosomal protein uL16 family. Part of the 50S ribosomal subunit.

In terms of biological role, binds 23S rRNA and is also seen to make contacts with the A and possibly P site tRNAs. The chain is Large ribosomal subunit protein uL16 from Ligilactobacillus salivarius (strain UCC118) (Lactobacillus salivarius).